Here is a 418-residue protein sequence, read N- to C-terminus: E3 ubiquitin-protein ligase pellino homolog 1 (418 aa).

The region spanning 13–200 (APVKYGELIV…MHPRNGFTED (188 aa)) is the FHA; atypical domain. Serine 121 is subject to Phosphoserine. Threonine 127 carries the phosphothreonine modification. The ring-like domain; necessary for ubiquitination of RIPK3 stretch occupies residues 311–399 (CGHVHGYHNW…TFHAACPFCA (89 aa)).

This sequence belongs to the pellino family. Interacts with MAP3K7. Upon IL1B treatment, forms a complex with TRAF6, IRAK1, IRAK4 and MYD88; this complex recruits MAP3K7/TAK1, TAB1 and TAB2 to mediate NF-kappa-B activation. Direct binding of SMAD6 to PELI1 prevents the complex formation and hence negatively regulates IL1R-TLR signaling and eventually NF-kappa-B-mediated gene expression. Interacts (via atypical FHA domain) with RIPK3. Binds preferentially to the 'Thr-182' phosphorylated form of RIPK3. Interacts with RIPK1. In terms of processing, phosphorylation by IRAK1 and IRAK4 enhances its E3 ligase activity. Phosphorylated by ATM in response to DNA damage, promoting localization to DNA double-strand breaks (DSBs) and ability to mediate 'Lys-63'-linked ubiquitination of NBN. Post-translationally, sumoylated.

The protein localises to the chromosome. It catalyses the reaction S-ubiquitinyl-[E2 ubiquitin-conjugating enzyme]-L-cysteine + [acceptor protein]-L-lysine = [E2 ubiquitin-conjugating enzyme]-L-cysteine + N(6)-ubiquitinyl-[acceptor protein]-L-lysine.. It functions in the pathway protein modification; protein ubiquitination. E3 ubiquitin ligase catalyzing the covalent attachment of ubiquitin moieties onto substrate proteins. Involved in the TLR and IL-1 signaling pathways via interaction with the complex containing IRAK kinases and TRAF6. Acts as a positive regulator of inflammatory response in microglia through activation of NF-kappa-B and MAP kinase. Mediates 'Lys-63'-linked polyubiquitination of IRAK1 allowing subsequent NF-kappa-B activation. Conjugates 'Lys-63'-linked ubiquitin chains to the adapter protein ASC/PYCARD, which in turn is crucial for NLRP3 inflammasome activation. Mediates 'Lys-48'-linked polyubiquitination of RIPK3 leading to its subsequent proteasome-dependent degradation; preferentially recognizes and mediates the degradation of the 'Thr-182' phosphorylated form of RIPK3. Negatively regulates necroptosis by reducing RIPK3 expression. Mediates 'Lys-63'-linked ubiquitination of RIPK1. Following phosphorylation by ATM, catalyzes 'Lys-63'-linked ubiquitination of NBN, promoting DNA repair via homologous recombination. Negatively regulates activation of the metabolic mTORC1 signaling pathway by mediating 'Lys-63'-linked ubiquitination of mTORC1-inhibitory protein TSC1 and thereby promoting TSC1/TSC2 complex stability. This Mus musculus (Mouse) protein is E3 ubiquitin-protein ligase pellino homolog 1 (Peli1).